The following is a 462-amino-acid chain: Hemopexin (462 aa).

An N-terminal signal peptide occupies residues 1 to 23; it reads MARVLGAPVALGLWSLCWSLAIA. O-linked (GalNAc...) threonine glycans are attached at residues threonine 24 and threonine 29. Residues 29–48 form a disordered region; that stretch reads TSAHGNVAEGETKPDPDVTE. Positions 30-40 are O-glycosylated at one site; that stretch reads SAHGNVAEGET. Positions 38–48 are enriched in basic and acidic residues; that stretch reads GETKPDPDVTE. 3 disulfides stabilise this stretch: cysteine 50-cysteine 231, cysteine 149-cysteine 154, and cysteine 188-cysteine 200. 4 Hemopexin repeats span residues 53-93, 94-139, 140-184, and 185-231; these read GWSF…WKNF, PSPV…FPGI, PSPL…SWPA, and VGNC…FMPC. Asparagine 64 is a glycosylation site (N-linked (GlcNAc...) (complex) asparagine). Histidine 79 contacts heme. Position 150 (histidine 150) interacts with heme. N-linked (GlcNAc...) (complex) asparagine glycosylation is present at asparagine 187. Residue histidine 236 participates in heme binding. N-linked (GlcNAc...) asparagine glycans are attached at residues asparagine 240 and asparagine 246. Cystine bridges form between cysteine 257-cysteine 460, cysteine 366-cysteine 408, and cysteine 418-cysteine 435. 4 Hemopexin repeats span residues 259–304, 305–352, 357–396, and 400–450; these read PHLV…WPQG, PSAV…VGTP, LDSVDAAFICPGSSRLHIMAGRRLWWLDLKSGAQATWTEL, and HEKV…ALPQ. Heme is bound at residue histidine 293. Asparagine 453 carries N-linked (GlcNAc...) (complex) asparagine glycosylation.

This sequence belongs to the hemopexin family. As to quaternary structure, interacts with FLVCR1. (Microbial infection) Interacts with hepatitis E virus/HEV protein ORF3. Post-translationally, N- and O-glycosylated. O-glycosylated with core 1 or possibly core 8 glycans. O-glycosylation in the 30-40 region is minor compared to glycosylation at Thr-24 and Thr-29. In terms of tissue distribution, expressed by the liver and secreted in plasma.

It localises to the secreted. Functionally, binds heme and transports it to the liver for breakdown and iron recovery, after which the free hemopexin returns to the circulation. The chain is Hemopexin (HPX) from Homo sapiens (Human).